The chain runs to 534 residues: CTP synthase (534 aa).

The amidoligase domain stretch occupies residues 1–266 (MKTKFIFVTG…DEQVVEKLNI (266 aa)). Ser-14 contacts CTP. Ser-14 contacts UTP. ATP is bound by residues 15–20 (SIGKGL) and Asp-72. The Mg(2+) site is built by Asp-72 and Glu-140. CTP contacts are provided by residues 147–149 (DIE), 187–192 (KTKPTQ), and Lys-223. UTP is bound by residues 187–192 (KTKPTQ) and Lys-223. The Glutamine amidotransferase type-1 domain maps to 292 to 534 (RIAIVGKYVN…IAAALHNIKA (243 aa)). Gly-354 is an L-glutamine binding site. The Nucleophile; for glutamine hydrolysis role is filled by Cys-381. L-glutamine is bound by residues 382–385 (LGMQ), Glu-405, and Arg-462. Residues His-507 and Glu-509 contribute to the active site.

This sequence belongs to the CTP synthase family. Homotetramer.

The enzyme catalyses UTP + L-glutamine + ATP + H2O = CTP + L-glutamate + ADP + phosphate + 2 H(+). It carries out the reaction L-glutamine + H2O = L-glutamate + NH4(+). The catalysed reaction is UTP + NH4(+) + ATP = CTP + ADP + phosphate + 2 H(+). It functions in the pathway pyrimidine metabolism; CTP biosynthesis via de novo pathway; CTP from UDP: step 2/2. Its activity is regulated as follows. Allosterically activated by GTP, when glutamine is the substrate; GTP has no effect on the reaction when ammonia is the substrate. The allosteric effector GTP functions by stabilizing the protein conformation that binds the tetrahedral intermediate(s) formed during glutamine hydrolysis. Inhibited by the product CTP, via allosteric rather than competitive inhibition. Functionally, catalyzes the ATP-dependent amination of UTP to CTP with either L-glutamine or ammonia as the source of nitrogen. Regulates intracellular CTP levels through interactions with the four ribonucleotide triphosphates. The chain is CTP synthase from Geotalea uraniireducens (strain Rf4) (Geobacter uraniireducens).